Consider the following 181-residue polypeptide: Cytochrome c-type biogenesis protein CcmE (181 aa).

Residues 1–8 (MNPRRKSR) lie on the Cytoplasmic side of the membrane. Residues 9–29 (LKVVVSIIFGVAVAAGLTLYA) traverse the membrane as a helical; Signal-anchor for type II membrane protein segment. The Periplasmic segment spans residues 30 to 181 (LSQNIDLFYT…TLKTLQGEAN (152 aa)). The heme site is built by His-131 and Tyr-135. 2 stretches are compositionally biased toward basic and acidic residues: residues 135-148 (YMPP…KEQH) and 156-166 (ADLKGTSARDK). The disordered stretch occupies residues 135 to 166 (YMPPELGDKLKEQHGAAGISEADLKGTSARDK).

Belongs to the CcmE/CycJ family.

It is found in the cell inner membrane. Heme chaperone required for the biogenesis of c-type cytochromes. Transiently binds heme delivered by CcmC and transfers the heme to apo-cytochromes in a process facilitated by CcmF and CcmH. This chain is Cytochrome c-type biogenesis protein CcmE, found in Actinobacillus pleuropneumoniae serotype 7 (strain AP76).